Consider the following 638-residue polypeptide: Ubiquilin-2 (638 aa).

Residues 1–26 (MAENGESSGPPRPSRGPAAAPGAASP) are compositionally biased toward low complexity. Disordered regions lie at residues 1–31 (MAEN…AEPK) and 107–158 (RPQG…SSFG). The residue at position 2 (A2) is an N-acetylalanine. A Phosphoserine modification is found at S25. Residues 33-107 (IKVTVKTPKE…VHLVIKSQNR (75 aa)) form the Ubiquitin-like domain. Over residues 112 to 158 (ATTQPSTTAGTSTTTTTTTTAAAPAATTSSAPRSSSTPTTTNSSSFG) the composition is skewed to low complexity. 2 STI1 domains span residues 189–217 (SPEM…QLIM) and 219–258 (NPQM…MQEM). A disordered region spans residues 298–364 (FGGNPFATVG…SGSSSSSTTA (67 aa)). Residues 305 to 316 (TVGSSSTSGEGT) are compositionally biased toward low complexity. Over residues 327–336 (LPNPWAPPPT) the composition is skewed to pro residues. Residues 337–364 (TQTAATTTTTTTTSSGSGSGSSSSSTTA) show a composition bias toward low complexity. 2 STI1 domains span residues 393–440 (NPQL…QEQM) and 444–476 (LPNF…QQGL). 11 tandem repeats follow at residues 505 to 507 (PVG), 508 to 510 (PVT), 511 to 513 (PIG), 514 to 516 (PIG), 517 to 519 (PIV), 520 to 522 (PFT), 523 to 525 (PIG), 526 to 528 (PIG), 529 to 531 (PIG), 532 to 533 (PT), and 535 to 537 (PAS). The interval 505-537 (PVGPVTPIGPIGPIVPFTPIGPIGPIGPTGPAS) is 11 X 3 AA tandem repeats P-X-X. The segment at 528-570 (GPIGPTGPASSPGSTGTGIPPATTVSSSAPTETISPTSESGPN) is disordered. The segment covering 533 to 551 (TGPASSPGSTGTGIPPATT) has biased composition (low complexity). The span at 552–570 (VSSSAPTETISPTSESGPN) shows a compositional bias: polar residues. One can recognise a UBA domain in the interval 589–635 (PPNPEVRFQQQLEQLNAMGFLNREANLQALIATGGDINAAIERLLGS).

Homodimer. Forms heterodimer with UBQLN1. Binds UBE3A and BTRC. Interacts with the 19S proteasome subunit. Interacts with C9orf72. Binds CD47. Interacts with HNRNPA1 and HNRNPU. Found in a complex with UBQLN1 and MAP1LC3A/B/C. Interacts with EPS15, EPN1 and EPN2. Interacts with HERPUD1. Interacts with RAD23A. Interacts with TARDBP. Interacts (via C-terminus) with FAF2 (via N-terminus). Interacts with UBQLN4. Post-translationally, degraded during macroautophagy. As to expression, highly expressed in smooth muscle. Expression in other tissues is very low.

It localises to the cytoplasm. It is found in the nucleus. Its subcellular location is the membrane. The protein resides in the cytoplasmic vesicle. The protein localises to the autophagosome. Functionally, plays an important role in the regulation of different protein degradation mechanisms and pathways including ubiquitin-proteasome system (UPS), autophagy and the endoplasmic reticulum-associated protein degradation (ERAD) pathway. Mediates the proteasomal targeting of misfolded or accumulated proteins for degradation by binding (via UBA domain) to their polyubiquitin chains and by interacting (via ubiquitin-like domain) with the subunits of the proteasome. Plays a role in the ERAD pathway via its interaction with ER-localized proteins FAF2/UBXD8 and HERPUD1 and may form a link between the polyubiquitinated ERAD substrates and the proteasome. Involved in the regulation of macroautophagy and autophagosome formation; required for maturation of autophagy-related protein LC3 from the cytosolic form LC3-I to the membrane-bound form LC3-II and may assist in the maturation of autophagosomes to autolysosomes by mediating autophagosome-lysosome fusion. Negatively regulates the endocytosis of GPCR receptors: AVPR2 and ADRB2, by specifically reducing the rate at which receptor-arrestin complexes concentrate in clathrin-coated pits (CCPs). Links CD47 to vimentin-containing intermediate filaments of the cytoskeleton. This chain is Ubiquilin-2 (Ubqln2), found in Mus musculus (Mouse).